The chain runs to 273 residues: MKSIVGVYETPQETIAAIEGLLTKGYDSDDISVVTSRRDTDYLESRTGTEVNQAIDAHQDESESFFDKLKDYFTMDDTATHSKALSDLDIKTDEIDKYQEDLDDGKLLVAVDTDADVIAPIDNGNALSGGFSSTNELDYTTKEEKTMPLREEQLKVDKEDVQTGEVEIGKEVKTEKRDMDIPVRHDEIYVERRPVDENKTDAAPVNDSEEIRVPIVEEKLEVTKKPVVTDEVVVGKRTVEENEHISETVKKEEPRLNKEGKVDGLDDDPLNNK.

Positions 241–264 (ENEHISETVKKEEPRLNKEGKVDG) are enriched in basic and acidic residues. A disordered region spans residues 241–273 (ENEHISETVKKEEPRLNKEGKVDGLDDDPLNNK).

The polypeptide is Stress response protein YsnF (ysnF) (Bacillus subtilis (strain 168)).